We begin with the raw amino-acid sequence, 311 residues long: Urease accessory protein UreD (311 aa).

This sequence belongs to the UreD family. As to quaternary structure, ureD, UreF and UreG form a complex that acts as a GTP-hydrolysis-dependent molecular chaperone, activating the urease apoprotein by helping to assemble the nickel containing metallocenter of UreC. The UreE protein probably delivers the nickel.

The protein localises to the cytoplasm. Required for maturation of urease via the functional incorporation of the urease nickel metallocenter. The sequence is that of Urease accessory protein UreD from Synechococcus sp. (strain CC9605).